The following is a 230-amino-acid chain: Cytidylate kinase (230 aa).

11 to 19 (GPAAAGKST) is an ATP binding site.

Belongs to the cytidylate kinase family. Type 1 subfamily.

The protein localises to the cytoplasm. The catalysed reaction is CMP + ATP = CDP + ADP. It catalyses the reaction dCMP + ATP = dCDP + ADP. In Oceanobacillus iheyensis (strain DSM 14371 / CIP 107618 / JCM 11309 / KCTC 3954 / HTE831), this protein is Cytidylate kinase.